The primary structure comprises 342 residues: S-adenosylmethionine:tRNA ribosyltransferase-isomerase (342 aa).

This sequence belongs to the QueA family. As to quaternary structure, monomer.

It is found in the cytoplasm. It catalyses the reaction 7-aminomethyl-7-carbaguanosine(34) in tRNA + S-adenosyl-L-methionine = epoxyqueuosine(34) in tRNA + adenine + L-methionine + 2 H(+). It participates in tRNA modification; tRNA-queuosine biosynthesis. Functionally, transfers and isomerizes the ribose moiety from AdoMet to the 7-aminomethyl group of 7-deazaguanine (preQ1-tRNA) to give epoxyqueuosine (oQ-tRNA). The protein is S-adenosylmethionine:tRNA ribosyltransferase-isomerase of Shouchella clausii (strain KSM-K16) (Alkalihalobacillus clausii).